Consider the following 197-residue polypeptide: Imidazoleglycerol-phosphate dehydratase (197 aa).

Belongs to the imidazoleglycerol-phosphate dehydratase family.

It is found in the cytoplasm. The enzyme catalyses D-erythro-1-(imidazol-4-yl)glycerol 3-phosphate = 3-(imidazol-4-yl)-2-oxopropyl phosphate + H2O. It participates in amino-acid biosynthesis; L-histidine biosynthesis; L-histidine from 5-phospho-alpha-D-ribose 1-diphosphate: step 6/9. The protein is Imidazoleglycerol-phosphate dehydratase of Xanthobacter autotrophicus (strain ATCC BAA-1158 / Py2).